The following is a 337-amino-acid chain: tRNA N6-adenosine threonylcarbamoyltransferase (337 aa).

The Fe cation site is built by H111 and H115. Residues 134–138 (LVSGG), D167, G180, and N272 each bind substrate. A Fe cation-binding site is contributed by D300.

It belongs to the KAE1 / TsaD family. The cofactor is Fe(2+).

The protein resides in the cytoplasm. It carries out the reaction L-threonylcarbamoyladenylate + adenosine(37) in tRNA = N(6)-L-threonylcarbamoyladenosine(37) in tRNA + AMP + H(+). Its function is as follows. Required for the formation of a threonylcarbamoyl group on adenosine at position 37 (t(6)A37) in tRNAs that read codons beginning with adenine. Is involved in the transfer of the threonylcarbamoyl moiety of threonylcarbamoyl-AMP (TC-AMP) to the N6 group of A37, together with TsaE and TsaB. TsaD likely plays a direct catalytic role in this reaction. In Aeromonas salmonicida (strain A449), this protein is tRNA N6-adenosine threonylcarbamoyltransferase.